A 74-amino-acid chain; its full sequence is U3-agatoxin-Ao1f (74 aa).

Positions 1-20 (MRAIISLLLISTMVFGVIEA) are cleaved as a signal peptide. A propeptide spanning residues 21–34 (VSLEEGLKIFEGER) is cleaved from the precursor. 4 disulfide bridges follow: Cys37/Cys53, Cys44/Cys58, Cys52/Cys68, and Cys60/Cys66. Asparagine amide is present on Asn72.

Belongs to the neurotoxin 07 (Beta/delta-agtx) family. 03 (aga-4) subfamily. Aga sub-subfamily. Expressed by the venom gland.

It localises to the secreted. Functionally, insecticidal neurotoxin that modulates the insect Nav channel (DmNaV1/tipE (para/tipE)) in a unique manner, with both the activation and inactivation processes being affected. The voltage dependence of activation is shifted toward more hyperpolarized potentials (analogous to site 4 toxins) and a non-inactivating persistent sodium current is induced (site 3-like action). Interestingly, both effects take place in a voltage-dependent manner, producing a bell-shaped curve between -80 and 0 mV. In vivo, induces an irreversible spastic paralysis when injected into insects. This chain is U3-agatoxin-Ao1f, found in Agelena orientalis (Funnel-web spider).